A 355-amino-acid chain; its full sequence is Glucose-1-phosphate thymidylyltransferase (355 aa).

Positions 107 and 220 each coordinate Mg(2+).

Belongs to the glucose-1-phosphate thymidylyltransferase family. It depends on Mg(2+) as a cofactor.

The catalysed reaction is dTTP + alpha-D-glucose 1-phosphate + H(+) = dTDP-alpha-D-glucose + diphosphate. The protein operates within antibiotic biosynthesis; streptomycin biosynthesis. Functionally, involved in the biosynthesis of the streptose moiety of streptomycin. Catalyzes the formation of dTDP-glucose, from dTTP and glucose 1-phosphate, as well as its pyrophosphorolysis. The sequence is that of Glucose-1-phosphate thymidylyltransferase (strD) from Streptomyces griseus.